Consider the following 194-residue polypeptide: Porimin (194 aa).

A signal peptide spans 1 to 24; it reads MALCARAALLLGALQVLALPGAVA. At 25–151 the chain is on the extracellular side; it reads QETYAQGSPS…PTKGKGSKFD (127 aa). 6 N-linked (GlcNAc...) asparagine glycosylation sites follow: Asn36, Asn47, Asn51, Asn59, Asn76, and Asn114. Residues 88–124 are disordered; that stretch reads KVSTPGVSPHVTPSASKSTPKTSASPNSTQTSASMTT. Over residues 99–124 the composition is skewed to low complexity; sequence TPSASKSTPKTSASPNSTQTSASMTT. Residues 152-172 form a helical membrane-spanning segment; it reads AGSFVGGIVLTLGVLSILYIG. Over 173-194 the chain is Cytoplasmic; the sequence is CKMYYSRRGIRYRSIDEHDAII. Ser186 is modified (phosphoserine).

It belongs to the CD164 family.

It is found in the membrane. Implicated in oncotic cell death, characterized by cell swelling, organelle swelling, vacuolization and increased membrane permeability. This is Porimin (Tmem123) from Rattus norvegicus (Rat).